The sequence spans 347 residues: Aromatic amino acid aminotransferase (347 aa).

The residue at position 214 (Lys-214) is an N6-(pyridoxal phosphate)lysine.

Belongs to the class-II pyridoxal-phosphate-dependent aminotransferase family. As to quaternary structure, homodimer. It depends on pyridoxal 5'-phosphate as a cofactor.

It catalyses the reaction an aromatic L-alpha-amino acid + 2-oxoglutarate = an aromatic oxo-acid + L-glutamate. Its function is as follows. Aminotransferase that catalyzes the conversion of aromatic amino acids and 2-oxoglutarate into corresponding aromatic oxo acids and L-glutamate. In Mycobacteroides abscessus (strain ATCC 19977 / DSM 44196 / CCUG 20993 / CIP 104536 / JCM 13569 / NCTC 13031 / TMC 1543 / L948) (Mycobacterium abscessus), this protein is Aromatic amino acid aminotransferase.